The primary structure comprises 88 residues: Small ribosomal subunit protein bS20 (88 aa).

Belongs to the bacterial ribosomal protein bS20 family.

Binds directly to 16S ribosomal RNA. In Clostridium novyi (strain NT), this protein is Small ribosomal subunit protein bS20.